A 364-amino-acid polypeptide reads, in one-letter code: Trans-enoyl reductase sthE (364 aa).

NADP(+) is bound at residue 51–54 (TDYK). Residue 137–144 (WGTAALAI) participates in substrate binding. NADP(+)-binding positions include 172–175 (ATAT), 195–198 (SESS), Y213, and 261–262 (LE). 281 to 285 (GFEGQ) provides a ligand contact to substrate. 351 to 352 (VK) contributes to the NADP(+) binding site.

This sequence belongs to the zinc-containing alcohol dehydrogenase family. Monomer.

It carries out the reaction 7 malonyl-CoA + acetyl-CoA + 10 AH2 + 5 S-adenosyl-L-methionine + 2 H(+) = dehydroprobetaenone I + 10 A + 5 S-adenosyl-L-homocysteine + 7 CO2 + 8 CoA + 6 H2O. It functions in the pathway mycotoxin biosynthesis. Trans-enoyl reductase; part of the gene cluster that mediates the biosynthesis of the phytotoxin stemphyloxin II. The first step of the pathway is the synthesis of dehydroprobetaenone I by the polyketide synthase sthA and the enoyl reductase sthE via condensation of one acetyl-CoA starter unit with 7 malonyl-CoA units and 5 methylations. The C-terminal reductase (R) domain of sthA catalyzes the reductive release of the polyketide chain. Because sthA lacks a designated enoylreductase (ER) domain, the required activity is provided the enoyl reductase sthE. The short-chain dehydrogenase/reductase sthC then catalyzes reduction of dehydroprobetaenone I to probetaenone I. The cytochrome P450 monooxygenase sthF catalyzes successive epoxidation, oxidation (resulting from epoxide opening) and hydroxylation to install a tertiary alcohol in the decaline ring to yield betaenone C from dehydroprobetaenone I and betaenone B from probetaenone I. The FAD-linked oxidoreductase sthB is responsible for the conversion of betaenone C to betaenone A via an intramolecular aldol reaction between C-1 and C-17 to form the bridged tricyclic system in betaenone A. Finally, the cytochrome P450 monooxygenase sthD catalyzes the hydroxylation of C-15 to afford the final metabolite stemphyloxin II. This is Trans-enoyl reductase sthE from Phaeosphaeria nodorum (strain SN15 / ATCC MYA-4574 / FGSC 10173) (Glume blotch fungus).